The chain runs to 150 residues: MKIWVDADACPGVIKEILFRVADRAKVEVTLVANHSMRIPPSRFIKMVTVPSGFDVADDEIVKRLDAGDLVITADIPLASEVIDKGGIALNPRGELYTVQNIKSILNMRDFMDTMRASGVQTGGPAAIGASEKQAFGNQLDRFVTKYHKL.

It belongs to the UPF0178 family.

This Shewanella sediminis (strain HAW-EB3) protein is UPF0178 protein Ssed_1350.